An 897-amino-acid polypeptide reads, in one-letter code: DNA endonuclease RBBP8 (897 aa).

The essential for binding to the MRN complex and for RPA focus formation on DNA damage stretch occupies residues 22–45; that stretch reads DLWTKLKECHDREVQGLQVKVTKL. A coiled-coil region spans residues 35-84; it reads VQGLQVKVTKLKQERILDAQRLEEFFTKNQQLREQQKVLHETIKVLEDRL. Residues 45–160 form a required for interaction with LMO4, probably by stabilizing the interaction through RPPB8 dimerization region; it reads LKQERILDAQ…AELECEEDVI (116 aa). Residues lysine 62 and lysine 115 each participate in a glycyl lysine isopeptide (Lys-Gly) (interchain with G-Cter in SUMO2) cross-link. A coiled-coil region spans residues 117–138; the sequence is ITELMNERNTLQEENKKLSEQL. A Glycyl lysine isopeptide (Lys-Gly) (interchain with G-Cter in SUMO2) cross-link involves residue lysine 193. Phosphoserine occurs at positions 233 and 276. Residues 292 to 307 show a composition bias toward basic and acidic residues; sequence KQPFEESTRNTEDSLR. Residues 292–325 are disordered; the sequence is KQPFEESTRNTEDSLRFSDSTSKTPPQEELPTRV. Residue threonine 315 is modified to Phosphothreonine; by CDK2. Residues serine 326, serine 327, and serine 349 each carry the phosphoserine modification. Glycyl lysine isopeptide (Lys-Gly) (interchain with G-Cter in SUMO2) cross-links involve residues lysine 360 and lysine 378. Serine 379 is subject to Phosphoserine. Glycyl lysine isopeptide (Lys-Gly) (interchain with G-Cter in SUMO2) cross-links involve residues lysine 396, lysine 404, and lysine 410. Residues 419–464 form a disordered region; it reads QNRTEYGKDSNTDKHLEPLKSLGGRTSKRKKTEEESEHEVSCPQAS. Basic and acidic residues predominate over residues 420–436; it reads NRTEYGKDSNTDKHLEP. Residues lysine 438 and lysine 449 each participate in a glycyl lysine isopeptide (Lys-Gly) (interchain with G-Cter in SUMO2) cross-link. Positions 490–494 match the PXDLS motif motif; the sequence is PLDLS. The segment at 509–557 is damage-recruitment motif; that stretch reads SETSKNKFRQVTLYEALKTIPKGFSSSRKASDGNCTLPKDSPGEPCSQE. A Glycyl lysine isopeptide (Lys-Gly) (interchain with G-Cter in SUMO2); alternate cross-link involves residue lysine 526. Residues lysine 530, lysine 572, and lysine 578 each participate in a glycyl lysine isopeptide (Lys-Gly) (interchain with G-Cter in SUMO2) cross-link. Lysine 604 is covalently cross-linked (Glycyl lysine isopeptide (Lys-Gly) (interchain with G-Cter in SUMO2); alternate). Glycyl lysine isopeptide (Lys-Gly) (interchain with G-Cter in SUMO2) cross-links involve residues lysine 613, lysine 638, and lysine 640. The segment at 641 to 685 is required for interaction with LMO4, probably by making physical contact with LMO4; that stretch reads SLQNNQDVSFENIQWSIDPGADLSQYKMDVTVIDTKDGSQSKLGG. Phosphoserine; by ATM is present on serine 664. A Glycyl lysine isopeptide (Lys-Gly) (interchain with G-Cter in SUMO2) cross-link involves residue lysine 676. Residue serine 679 is modified to Phosphoserine. Residues 704–723 are disordered; that stretch reads KKQEQKGEKSSNEERKMNDS. Lysine 719 participates in a covalent cross-link: Glycyl lysine isopeptide (Lys-Gly) (interchain with G-Cter in SUMO2). The residue at position 723 (serine 723) is a Phosphoserine. At serine 745 the chain carries Phosphoserine; by ATM. Residue lysine 782 forms a Glycyl lysine isopeptide (Lys-Gly) (interchain with G-Cter in SUMO2) linkage. The KLHL15-binding signature appears at 840 to 842; it reads FRY. Threonine 847 carries the post-translational modification Phosphothreonine; by CDK1. Position 859 is a phosphothreonine; by ATR (threonine 859). A Glycyl lysine isopeptide (Lys-Gly) (interchain with G-Cter in SUMO2) cross-link involves residue lysine 869. Residues 873–897 are disordered; that stretch reads DPCPRPKRRQPYNAIFSPKGKEQKT.

Belongs to the COM1/SAE2/CtIP family. As to quaternary structure, homotetramer; formed by antiparallel association of helical extensions protruding from the N-termini of two parallel coiled-coil dimers. Forms a dumbbell-shaped particle in which polar globular domains are held about 30 nm apart by a central rod. Homotetramerization is required for DNA-end resection and repair. Interacts (via the PXDLS motif) with CTBP1; the interaction is disrupted via binding of the adenovirus E1A to CTBP1. Component of the BRCA1-RBBP8 complex. Interacts (the Ser-327 phosphorylated form) with BRCA1 (via the C-terminal BRCT domains): the interaction occurs in the G2 phase, ubiquitinates RBBP8 and involves RBBP8 in BRCA1-dependent G2/M checkpoint control on DNA damage. Interacts with RB1. Interacts with the MRN complex; interacts directly with MRE11; the interaction is required for efficient homologous recombination (HR) and regulation of the MRN complex. Interacts directly with RAD50. Interacts (when phosphorylated by CDK1) with NBN; promoting association with the MRN complex. Interacts with LM04 (via the LIM zinc-binding 1 domain). Interacts with SIAH1. Interacts with RNF138. Interacts with EXD2. Interacts with CUL3 and KLHL15; this interaction leads to RBBP8 proteasomal degradation. Directly interacts with PIN1; this interaction depends upon RBBP8 phosphorylation, predominantly at Thr-315. Interacts with FZR1; this interaction leads to APC/C-mediated RBBP8 proteasomal degradation. Interacts with AUNIP; leading to recruitment of RBBP8 to sites of DNA damage. Interacts with SAMHD1. Interacts with HDGFL2. Hyperphosphorylation upon ionizing radiation results in dissociation from BRCA1. Phosphorylation at Thr-847 by CDK1 is essential for the recruitment to DNA and the DNA repair function. Phosphorylation at Thr-847 and Thr-859 promote interaction with NBN and recruitment to double-strand breaks (DSBs). Phosphorylated on Ser-327 as cells enter G2 phase. This phosphorylation is required for binding BRCA1 and for the G2/M DNA damage transition checkpoint control. Phosphorylation at Thr-315, probably catalyzed by CDK2, is required for PIN1-binding, while phosphorylation at Ser-276 serves as a PIN1 isomerization site. Phosphorylation at Thr-315 is cell-cycle dependent. It steadily increases during S phase, peaks at late S/G2 phase, and drops at G1. Phosphorylation is not required for tetramerization. Binds to DNA more strongly when dephosphorylated. Post-translationally, ubiquitinated. Ubiquitination at multiple sites by BRCA1 (via its N-terminal RING domain) does not lead to its proteasomal degradation but instead the ubiquitinated RBBP8 binds to chromatin following DNA damage and may play a role in G2/M checkpoint control. Ubiquitinated by RNF138 at its N-terminus. Ubiquitinated through 'Lys-48' by the E3 CUL3-KLHL15 complex; this modification leads to proteasomal degradation. Ubiquitinated by the E3 FZR1/APC/C complex; this modification leads to proteasomal degradation. Expressed in ER-positive breast cancer lines, but tends to be down-regulated ER-negative cells (at protein level).

The protein resides in the nucleus. The protein localises to the chromosome. Its function is as follows. Endonuclease that cooperates with the MRE11-RAD50-NBN (MRN) complex in DNA-end resection, the first step of double-strand break (DSB) repair through the homologous recombination (HR) pathway. HR is restricted to S and G2 phases of the cell cycle and preferentially repairs DSBs resulting from replication fork collapse. Key determinant of DSB repair pathway choice, as it commits cells to HR by preventing classical non-homologous end-joining (NHEJ). Specifically promotes the endonuclease activity of the MRN complex to clear DNA ends containing protein adducts: recruited to DSBs by NBN following phosphorylation by CDK1, and promotes the endonuclease activity of MRE11 to clear protein-DNA adducts and generate clean double-strand break ends. Functions downstream of the MRN complex and ATM, promotes ATR activation and its recruitment to DSBs in the S/G2 phase facilitating the generation of ssDNA. Component of the BRCA1-RBBP8 complex that regulates CHEK1 activation and controls cell cycle G2/M checkpoints on DNA damage. During immunoglobulin heavy chain class-switch recombination, promotes microhomology-mediated alternative end joining (A-NHEJ) and plays an essential role in chromosomal translocations. Binds preferentially to DNA Y-junctions and to DNA substrates with blocked ends and promotes intermolecular DNA bridging. This chain is DNA endonuclease RBBP8 (RBBP8), found in Homo sapiens (Human).